We begin with the raw amino-acid sequence, 287 residues long: Troponin T, cardiac muscle (287 aa).

2 stretches are compositionally biased toward acidic residues: residues 1–31 (MSDV…EEAG) and 44–59 (EDGE…DGPV). Disordered stretches follow at residues 1 to 85 (MSDV…GERV) and 124 to 208 (KDRI…EKKK). Ser2 is subject to N-acetylserine. The residue at position 2 (Ser2) is a Phosphoserine; by CK2. The segment covering 66–79 (APGPFMPNLVPPKI) has biased composition (pro residues). Composition is skewed to basic and acidic residues over residues 124 to 173 (KDRI…DEAR) and 192 to 208 (QAER…EKKK). Position 197 is a phosphoserine; by PKC/PRKCA (Ser197). Position 202 is a phosphothreonine; by PKC/PRKCA and RAF1 (Thr202). A Phosphothreonine; by PKC/PRKCA modification is found at Thr283.

This sequence belongs to the troponin T family. Post-translationally, phosphorylation at Thr-202 by PRKCA induces significant reduction in myofilament calcium sensitivity and actomyosin ATPase activity.

Its function is as follows. Troponin T is the tropomyosin-binding subunit of troponin, the thin filament regulatory complex which confers calcium-sensitivity to striated muscle actomyosin ATPase activity. This Ovis aries (Sheep) protein is Troponin T, cardiac muscle (TNNT2).